Reading from the N-terminus, the 313-residue chain is Aspartate carbamoyltransferase catalytic subunit (313 aa).

2 residues coordinate carbamoyl phosphate: Arg55 and Thr56. Lys83 lines the L-aspartate pocket. 3 residues coordinate carbamoyl phosphate: Arg105, His138, and Gln141. Residues Arg171 and Arg225 each coordinate L-aspartate. 2 residues coordinate carbamoyl phosphate: Gly266 and Pro267.

It belongs to the aspartate/ornithine carbamoyltransferase superfamily. ATCase family. In terms of assembly, heterododecamer (2C3:3R2) of six catalytic PyrB chains organized as two trimers (C3), and six regulatory PyrI chains organized as three dimers (R2).

It catalyses the reaction carbamoyl phosphate + L-aspartate = N-carbamoyl-L-aspartate + phosphate + H(+). It functions in the pathway pyrimidine metabolism; UMP biosynthesis via de novo pathway; (S)-dihydroorotate from bicarbonate: step 2/3. Catalyzes the condensation of carbamoyl phosphate and aspartate to form carbamoyl aspartate and inorganic phosphate, the committed step in the de novo pyrimidine nucleotide biosynthesis pathway. The protein is Aspartate carbamoyltransferase catalytic subunit of Corynebacterium diphtheriae (strain ATCC 700971 / NCTC 13129 / Biotype gravis).